A 1025-amino-acid polypeptide reads, in one-letter code: Multidrug resistance protein MdtC (1025 aa).

Transmembrane regions (helical) follow at residues 3 to 23 (FFALFIYRPVATILLSVAITL), 333 to 353 (EVEQTLIISVALVILVVFLFL), 360 to 380 (IIPAVVVPVSLIGTFAAMYLC), 387 to 407 (LSLMALTIATGFVVDDAIVVL), 431 to 451 (VGFTVLSMSLSLVAVFLPLLL), 463 to 483 (FAVTLSVAIGISLLVSLTLTP), 528 to 548 (LVGVVLLGTIALNIWLYISIP), 853 to 873 (VILIIAAIATVYIVLGILYES), 875 to 895 (VHPLTILSTLPSAGVGALLAL), 897 to 917 (LFNAPFSLIALIGIMLLIGIV), 953 to 973 (PIMMTTLAALFGALPLVLSGG), and 984 to 1004 (ITIVGGLVMSQLLTLYTTPVV).

Belongs to the resistance-nodulation-cell division (RND) (TC 2.A.6) family. MdtC subfamily. As to quaternary structure, part of a tripartite efflux system composed of MdtA, MdtB and MdtC. MdtC forms a heteromultimer with MdtB.

It is found in the cell inner membrane. Its function is as follows. The MdtABC tripartite complex confers resistance against novobiocin and deoxycholate. This is Multidrug resistance protein MdtC from Escherichia coli O8 (strain IAI1).